A 134-amino-acid polypeptide reads, in one-letter code: Small ribosomal subunit protein uS9 (134 aa).

Positions 109–134 (KGDPRRKEPKKFGGRGARARRQKSYR) are disordered. The span at 115-134 (KEPKKFGGRGARARRQKSYR) shows a compositional bias: basic residues.

It belongs to the universal ribosomal protein uS9 family.

This is Small ribosomal subunit protein uS9 from Methanopyrus kandleri (strain AV19 / DSM 6324 / JCM 9639 / NBRC 100938).